The chain runs to 350 residues: Biotin synthase (350 aa).

The Radical SAM core domain occupies 41 to 268 (NEVQISRLLS…LSRVRLSAGR (228 aa)). Residues C56, C60, and C63 each coordinate [4Fe-4S] cluster. [2Fe-2S] cluster-binding residues include C100, C131, C191, and R263.

The protein belongs to the radical SAM superfamily. Biotin synthase family. In terms of assembly, homodimer. It depends on [4Fe-4S] cluster as a cofactor. Requires [2Fe-2S] cluster as cofactor.

It catalyses the reaction (4R,5S)-dethiobiotin + (sulfur carrier)-SH + 2 reduced [2Fe-2S]-[ferredoxin] + 2 S-adenosyl-L-methionine = (sulfur carrier)-H + biotin + 2 5'-deoxyadenosine + 2 L-methionine + 2 oxidized [2Fe-2S]-[ferredoxin]. The protein operates within cofactor biosynthesis; biotin biosynthesis; biotin from 7,8-diaminononanoate: step 2/2. Functionally, catalyzes the conversion of dethiobiotin (DTB) to biotin by the insertion of a sulfur atom into dethiobiotin via a radical-based mechanism. The protein is Biotin synthase of Shewanella putrefaciens (strain CN-32 / ATCC BAA-453).